The following is a 235-amino-acid chain: Large ribosomal subunit protein uL1 (235 aa).

Belongs to the universal ribosomal protein uL1 family. Part of the 50S ribosomal subunit.

In terms of biological role, binds directly to 23S rRNA. The L1 stalk is quite mobile in the ribosome, and is involved in E site tRNA release. Its function is as follows. Protein L1 is also a translational repressor protein, it controls the translation of the L11 operon by binding to its mRNA. This is Large ribosomal subunit protein uL1 from Paenarthrobacter aurescens (strain TC1).